The sequence spans 429 residues: Ribosomal RNA small subunit methyltransferase B (429 aa).

S-adenosyl-L-methionine contacts are provided by residues 254 to 260 (CSAPGGK), D277, D303, and D322. C375 serves as the catalytic Nucleophile. The disordered stretch occupies residues 397-419 (ALSETGTPDQPGQQNLPGGEEGD). A compositionally biased stretch (polar residues) spans 400-412 (ETGTPDQPGQQNL).

It belongs to the class I-like SAM-binding methyltransferase superfamily. RsmB/NOP family.

The protein localises to the cytoplasm. It carries out the reaction cytidine(967) in 16S rRNA + S-adenosyl-L-methionine = 5-methylcytidine(967) in 16S rRNA + S-adenosyl-L-homocysteine + H(+). Specifically methylates the cytosine at position 967 (m5C967) of 16S rRNA. The sequence is that of Ribosomal RNA small subunit methyltransferase B from Salmonella dublin (strain CT_02021853).